Here is a 345-residue protein sequence, read N- to C-terminus: Type II restriction enzyme HgiCI (345 aa).

It carries out the reaction Endonucleolytic cleavage of DNA to give specific double-stranded fragments with terminal 5'-phosphates.. Functionally, a P subtype restriction enzyme that recognizes the double-stranded sequence 5'-GGYRCC-3' and cleaves after G-1. In Herpetosiphon aurantiacus (Herpetosiphon giganteus), this protein is Type II restriction enzyme HgiCI (hgiCIR).